Here is a 742-residue protein sequence, read N- to C-terminus: 5-methyltetrahydropteroyltriglutamate--homocysteine methyltransferase (742 aa).

5-methyltetrahydropteroyltri-L-glutamate-binding positions include 18-21 (REWK) and Lys-112. L-homocysteine is bound by residues 420–422 (IGS) and Glu-473. L-methionine is bound by residues 420–422 (IGS) and Glu-473. Trp-550 is a 5-methyltetrahydropteroyltri-L-glutamate binding site. Residue Asp-588 participates in L-homocysteine binding. Residue Asp-588 coordinates L-methionine. Residue Glu-594 coordinates 5-methyltetrahydropteroyltri-L-glutamate. Residues His-630, Cys-632, and Glu-654 each contribute to the Zn(2+) site. His-683 (proton donor) is an active-site residue. Cys-715 is a Zn(2+) binding site.

The protein belongs to the vitamin-B12 independent methionine synthase family. Zn(2+) is required as a cofactor.

The enzyme catalyses 5-methyltetrahydropteroyltri-L-glutamate + L-homocysteine = tetrahydropteroyltri-L-glutamate + L-methionine. Its pathway is amino-acid biosynthesis; L-methionine biosynthesis via de novo pathway; L-methionine from L-homocysteine (MetE route): step 1/1. Catalyzes the transfer of a methyl group from 5-methyltetrahydrofolate to homocysteine resulting in methionine formation. The protein is 5-methyltetrahydropteroyltriglutamate--homocysteine methyltransferase of Staphylococcus aureus (strain Mu3 / ATCC 700698).